The chain runs to 270 residues: Undecaprenyl-diphosphatase 1 (270 aa).

7 consecutive transmembrane segments (helical) span residues 5–25 (YYIL…PIPI), 42–62 (IEGF…VLLI), 89–109 (FFFI…GVLF), 117–137 (LKGV…LWII), 192–212 (FSFL…ITDI), 220–240 (TLFV…YISL), and 250–270 (GNLK…LIFL).

This sequence belongs to the UppP family.

It localises to the cell membrane. It carries out the reaction di-trans,octa-cis-undecaprenyl diphosphate + H2O = di-trans,octa-cis-undecaprenyl phosphate + phosphate + H(+). In terms of biological role, catalyzes the dephosphorylation of undecaprenyl diphosphate (UPP). Confers resistance to bacitracin. The chain is Undecaprenyl-diphosphatase 1 from Bacillus cereus (strain ATCC 10987 / NRS 248).